The sequence spans 607 residues: UvrABC system protein C (607 aa).

Positions glycine 16 to isoleucine 94 constitute a GIY-YIG domain. The 36-residue stretch at glutamine 203–valine 238 folds into the UVR domain.

The protein belongs to the UvrC family. Interacts with UvrB in an incision complex.

It localises to the cytoplasm. In terms of biological role, the UvrABC repair system catalyzes the recognition and processing of DNA lesions. UvrC both incises the 5' and 3' sides of the lesion. The N-terminal half is responsible for the 3' incision and the C-terminal half is responsible for the 5' incision. The chain is UvrABC system protein C from Pseudomonas putida (strain ATCC 700007 / DSM 6899 / JCM 31910 / BCRC 17059 / LMG 24140 / F1).